The sequence spans 367 residues: MTTHQSIRRLSRIAALVGLAFVAGTVAAADGKAELQALPEAKAGNADMVELGKHLFFDTRLSGDMGVSCASCHDPAKGFSDGMPLSAGYPSVEYFRNAPTLINSRFKNVFMWDGRLDGADMGTLVRDMLTEAHTMNMDSRLMQERLSQVPEYVAMWQKFRKDDINGMRVYGVVGEYVKTLVSQNAPIDRFLKGDGSALTSQQKDGYEIFTGKGGCVACHNGPLGSDGQVHNTGVPENPEVLKNPNRTVTLLRHYATSGMPNYMNARTDLGHYAISKDPADMNKFATPSLRELKYTAPYMHNGMLTTLDQVVDFYNQGGGQGSELTPLGLSGSEKKALVAFLEALSGEPLNVVAPTLPDYQPRQFGKN.

A signal peptide spans 1-28 (MTTHQSIRRLSRIAALVGLAFVAGTVAA). Cytochrome c domains follow at residues 47 to 157 (DMVE…AMWQ) and 200 to 345 (SQQK…EALS). Residues Cys69, Cys72, His73, Cys215, Cys218, and His219 each coordinate heme c.

The iodate reductase (Idr) complex is composed of a molybdopterin-dependent iodate reductase (IdrA and IdrB subunits) and two associated peroxidases (IdrP1 and IdrP2). Heme c is required as a cofactor.

It localises to the periplasm. The enzyme catalyses 2 Fe(II)-[cytochrome c] + H2O2 + 2 H(+) = 2 Fe(III)-[cytochrome c] + 2 H2O. Involved in iodate respiration. May play a critical role in detoxification of inadvertent H(2)O(2) generated by the iodate reductase IdrA/IdrB. In Denitromonas iodatirespirans, this protein is Cytochrome-c peroxidase IdrP2.